The primary structure comprises 323 residues: Glyoxylate/hydroxypyruvate reductase B (323 aa).

Active-site residues include Arg-237 and Glu-266. The active-site Proton donor is His-285.

The protein belongs to the D-isomer specific 2-hydroxyacid dehydrogenase family. GhrB subfamily. Homodimer.

It localises to the cytoplasm. The catalysed reaction is glycolate + NADP(+) = glyoxylate + NADPH + H(+). The enzyme catalyses (R)-glycerate + NAD(+) = 3-hydroxypyruvate + NADH + H(+). It catalyses the reaction (R)-glycerate + NADP(+) = 3-hydroxypyruvate + NADPH + H(+). Functionally, catalyzes the NADPH-dependent reduction of glyoxylate and hydroxypyruvate into glycolate and glycerate, respectively. The protein is Glyoxylate/hydroxypyruvate reductase B of Klebsiella pneumoniae (strain 342).